Consider the following 258-residue polypeptide: Acyl-[acyl-carrier-protein]--UDP-N-acetylglucosamine O-acyltransferase (258 aa).

Belongs to the transferase hexapeptide repeat family. LpxA subfamily. In terms of assembly, homotrimer.

Its subcellular location is the cytoplasm. The catalysed reaction is a (3R)-hydroxyacyl-[ACP] + UDP-N-acetyl-alpha-D-glucosamine = a UDP-3-O-[(3R)-3-hydroxyacyl]-N-acetyl-alpha-D-glucosamine + holo-[ACP]. It participates in glycolipid biosynthesis; lipid IV(A) biosynthesis; lipid IV(A) from (3R)-3-hydroxytetradecanoyl-[acyl-carrier-protein] and UDP-N-acetyl-alpha-D-glucosamine: step 1/6. Its function is as follows. Involved in the biosynthesis of lipid A, a phosphorylated glycolipid that anchors the lipopolysaccharide to the outer membrane of the cell. This chain is Acyl-[acyl-carrier-protein]--UDP-N-acetylglucosamine O-acyltransferase, found in Neisseria meningitidis serogroup A / serotype 4A (strain DSM 15465 / Z2491).